Reading from the N-terminus, the 612-residue chain is Zinc metalloproteinase-disintegrin-like berythractivase (612 aa).

An N-terminal signal peptide occupies residues 1-20 (MIQVLLVIICLEAFPYQGSS). Residues 21-187 (IILESGNVND…EPIKKASLLN (167 aa)) constitute a propeptide that is removed on maturation. The region spanning 200–396 (KYVEFVVVLD…NRPQCLLNKP (197 aa)) is the Peptidase M12B domain. Residue Glu-203 coordinates Ca(2+). N-linked (GlcNAc...) asparagine glycosylation is present at Asn-260. Asp-287 is a Ca(2+) binding site. 3 disulfide bridges follow: Cys-311–Cys-391, Cys-351–Cys-375, and Cys-353–Cys-358. His-336 is a Zn(2+) binding site. Residue Glu-337 is part of the active site. Residues His-340 and His-346 each contribute to the Zn(2+) site. The N-linked (GlcNAc...) asparagine glycan is linked to Asn-348. Asn-374 is a glycosylation site (N-linked (GlcNAc...) asparagine). Ca(2+) contacts are provided by Cys-391, Asn-394, Val-406, Asn-409, Leu-411, Glu-413, Glu-416, and Asp-419. A Disintegrin domain is found at 404 to 490 (PPVCGNELLE…DCPMDDFQRN (87 aa)). Disulfide bonds link Cys-407–Cys-436, Cys-418–Cys-431, Cys-420–Cys-426, Cys-430–Cys-453, Cys-444–Cys-450, Cys-449–Cys-475, Cys-462–Cys-482, Cys-469–Cys-501, Cys-494–Cys-506, Cys-513–Cys-563, Cys-528–Cys-574, Cys-541–Cys-551, Cys-558–Cys-600, and Cys-594–Cys-605. An N-linked (GlcNAc...) asparagine glycan is attached at Asn-432. Positions 468 to 470 (DCD) match the D/ECD-tripeptide motif. Residues Asp-470, Leu-471, Glu-473, and Asp-485 each contribute to the Ca(2+) site.

The protein belongs to the venom metalloproteinase (M12B) family. P-III subfamily. P-IIIa sub-subfamily. Monomer. The cofactor is Zn(2+). Highly glycosylated. As to expression, expressed by the venom gland.

It is found in the secreted. Its activity is regulated as follows. Inhibited by EDTA and o-phenanthroline. Not inhibited by PMSF, benzamidine, irreversible serine-proteinase inhibitors and cysteine proteinase inhibitor E-64. Functionally, potent activator of prothrombin (F2). Does not elicit any hemorrhagic response. Barely inhibits collagen-induced platelet aggregation. Binds neither collagen, nor the jararhagin monoclonal antibody MAJar3. Hydrolyzes the Aalpha-chain of fibrin and fibrinogen, without affecting the Bbeta- and gamma-chains. Is capable of triggering endothelial pro-inflammatory and procoagulant cell responses, but fails to trigger apoptosis. Induces von Willebrand factor release, and the expression of both ICAM1 and E-selectin (SELE) (without increase in VCAM1) in endothelial cells (HUVEC). Is also able to up-regulate the synthesis of the coagulation factor TF (F3). Enhances nitric oxide (NO) generation, prostacyclin production and interleukin-8 release. The sequence is that of Zinc metalloproteinase-disintegrin-like berythractivase from Bothrops erythromelas (Caatinga lance head).